The chain runs to 414 residues: MYQRNILVEQTDPEVWAAIQAEDRRQEEHIELIASENYASPAVMAAQGSQLTNKYAEGYPGKRYYGGCENVDVIEQLAIDRIKQLFGAEAANVQPNSGSQANQAVLMAFLKPGDTILGMSLAEGGHLTHGMPLNMSGKWFNVVSYGLNDKEEIDYDALEAKAREHKPKLIIAGASAYALRIDFERFAKIAKEVGAIFWVDIAHYAGLVVAGEYPNPVPFADVVTSTTHKSLRGPRGGIILMKAEHEKAINSAIFPGLQGGPLEHVIAAKAVAFKEALSPEFKQYQQQVTKNAKVFAETLIQRGLRIVSGRTESHVMLVDLRAKGITGKEAEAALGKAHITINKNAIPNDPEKPMVTSGIRVGTPAITTRGFKEEETRLTANLVADVLDNPHDEANLEAVRAKVHALTSRFPVYR.

Residues leucine 121 and 125–127 each bind (6S)-5,6,7,8-tetrahydrofolate; that span reads GHL. An N6-(pyridoxal phosphate)lysine modification is found at lysine 229.

It belongs to the SHMT family. Homodimer. The cofactor is pyridoxal 5'-phosphate.

The protein resides in the cytoplasm. It carries out the reaction (6R)-5,10-methylene-5,6,7,8-tetrahydrofolate + glycine + H2O = (6S)-5,6,7,8-tetrahydrofolate + L-serine. The protein operates within one-carbon metabolism; tetrahydrofolate interconversion. It functions in the pathway amino-acid biosynthesis; glycine biosynthesis; glycine from L-serine: step 1/1. Its function is as follows. Catalyzes the reversible interconversion of serine and glycine with tetrahydrofolate (THF) serving as the one-carbon carrier. This reaction serves as the major source of one-carbon groups required for the biosynthesis of purines, thymidylate, methionine, and other important biomolecules. Also exhibits THF-independent aldolase activity toward beta-hydroxyamino acids, producing glycine and aldehydes, via a retro-aldol mechanism. In Acidovorax ebreus (strain TPSY) (Diaphorobacter sp. (strain TPSY)), this protein is Serine hydroxymethyltransferase.